A 294-amino-acid polypeptide reads, in one-letter code: Tetraspanin-15 (294 aa).

Residues 1–23 lie on the Cytoplasmic side of the membrane; it reads MPRGDSEQVRYCARFSYLWLKFS. The helical transmembrane segment at 24–44 threads the bilayer; sequence LIIYSTVFWLIGGLVLSVGIY. At 45-62 the chain is on the extracellular side; sequence AEAERQKYKTLESAFLAP. Residues 63-83 form a helical membrane-spanning segment; it reads AIILILLGVVMFIVSFIGVLA. Topologically, residues 84-94 are cytoplasmic; it reads SLRDNLCLLQS. The chain crosses the membrane as a helical span at residues 95–115; the sequence is FMYILGICLVMELIGGIVALI. The Extracellular segment spans residues 116–235; the sequence is FRNQTIDFLN…WFMDNYTIMA (120 aa). N118 carries an N-linked (GlcNAc...) asparagine glycan. Cystine bridges form between C154-C219, C155-C185, C171-C179, and C186-C198. N189 and N230 each carry an N-linked (GlcNAc...) asparagine glycan. The chain crosses the membrane as a helical span at residues 236 to 256; the sequence is GLLLGILLPQFLGVLLTLLYI. At 257-294 the chain is on the cytoplasmic side; that stretch reads TRVEDIILEHSVTDGLLGPGAKSRTDTAGTGCCLCYPD.

It belongs to the tetraspanin (TM4SF) family. Interacts with ADAM10; the interaction influences ADAM10 substrate specificity, endocytosis and turnover. Post-translationally, palmitoylated.

The protein localises to the cell membrane. It is found in the late endosome membrane. Part of TspanC8 subgroup, composed of 6 members that interact with the transmembrane metalloprotease ADAM10. This interaction is required for ADAM10 exit from the endoplasmic reticulum and for enzymatic maturation and trafficking to the cell surface as well as substrate specificity. Different TspanC8/ADAM10 complexes have distinct substrates. Promotes ADAM10-mediated cleavage of CDH2. Negatively regulates ligand-induced Notch activity probably by regulating ADAM10 activity. This Mus musculus (Mouse) protein is Tetraspanin-15 (Tspan15).